The primary structure comprises 201 residues: MKVVILDTGCANLSSVTYAIRKLGYQPEISQETATILAADKLLLPGVGTASAAMDQLKQRELIPLIKVLSQPVLGICLGMQLFAATSEESDNVAGNNVTLLEVMASPVQKMATHGLPLPHMGWNQVLPKAGHPLFRGIEDHAYFYFVHSYAIPLNTYTIAQTEYGNIFSSAIAKDNFFGVQFHPERSGAAGARLLKNFLEM.

The region spanning K2–M201 is the Glutamine amidotransferase type-1 domain. C77 acts as the Nucleophile in catalysis. Catalysis depends on residues H183 and E185.

Heterodimer of HisH and HisF.

It is found in the cytoplasm. It carries out the reaction 5-[(5-phospho-1-deoxy-D-ribulos-1-ylimino)methylamino]-1-(5-phospho-beta-D-ribosyl)imidazole-4-carboxamide + L-glutamine = D-erythro-1-(imidazol-4-yl)glycerol 3-phosphate + 5-amino-1-(5-phospho-beta-D-ribosyl)imidazole-4-carboxamide + L-glutamate + H(+). It catalyses the reaction L-glutamine + H2O = L-glutamate + NH4(+). The protein operates within amino-acid biosynthesis; L-histidine biosynthesis; L-histidine from 5-phospho-alpha-D-ribose 1-diphosphate: step 5/9. IGPS catalyzes the conversion of PRFAR and glutamine to IGP, AICAR and glutamate. The HisH subunit catalyzes the hydrolysis of glutamine to glutamate and ammonia as part of the synthesis of IGP and AICAR. The resulting ammonia molecule is channeled to the active site of HisF. This Photorhabdus laumondii subsp. laumondii (strain DSM 15139 / CIP 105565 / TT01) (Photorhabdus luminescens subsp. laumondii) protein is Imidazole glycerol phosphate synthase subunit HisH.